The chain runs to 176 residues: MFKGTTIIAVRKGAKVSVAGDGQITFGENTILKHGAKKIRRLYNGEVIVGFAGSVADALTLSQKFEEKLEQYGGNLKRAAVELAQEWRKDKILRKLEALLIAVDKKDTLLISGTGEVIEPDEDVIGIGSGGNYAMAAALALRYNTDLDTEDIAKKALEIASKICVYTNNNITVETL.

The active site involves Thr-5. Na(+) is bound by residues Ser-161, Cys-164, and Thr-167.

Belongs to the peptidase T1B family. HslV subfamily. In terms of assembly, a double ring-shaped homohexamer of HslV is capped on each side by a ring-shaped HslU homohexamer. The assembly of the HslU/HslV complex is dependent on binding of ATP.

It localises to the cytoplasm. It carries out the reaction ATP-dependent cleavage of peptide bonds with broad specificity.. Allosterically activated by HslU binding. Its function is as follows. Protease subunit of a proteasome-like degradation complex believed to be a general protein degrading machinery. In Thermoanaerobacter sp. (strain X514), this protein is ATP-dependent protease subunit HslV.